Consider the following 1440-residue polypeptide: Gag-Pol polyprotein (1440 aa).

Gly-2 carries N-myristoyl glycine; by host lipidation. Residues 7-31 (VLSGGKLDAWEKIRLRPGGKKKYRL) form an interaction with Gp41 region. Positions 8–43 (LSGGKLDAWEKIRLRPGGKKKYRLKHLVWASRELER) are interaction with host CALM1. Residues 12–19 (KLDAWEKI) form an interaction with host AP3D1 region. Positions 14 to 33 (DAWEKIRLRPGGKKKYRLKH) are interaction with membrane phosphatidylinositol 4,5-bisphosphate and RNA. The short motif at 16–22 (WEKIRLR) is the Nuclear export signal element. The short motif at 26-32 (KKKYRLK) is the Nuclear localization signal element. Positions 73–77 (EEIKS) are interaction with membrane phosphatidylinositol 4,5-bisphosphate. Tyr-138 is modified (phosphotyrosine; by host). The tract at residues 195-233 (NIVGGHQAAMQMLKDTINEEAADWDRVHPVHAGPIPPGQ) is interaction with human PPIA/CYPA and NUP153. A dimerization/Multimerization of capsid protein p24 region spans residues 283 to 369 (YSPVSILDIR…GGPSHKARVL (87 aa)). CCHC-type zinc fingers lie at residues 396–413 (IKCFNCGKEGHLARNCRA) and 417–434 (KGCWKCGKEGHQMKDCTE). The segment at 494–498 (PQITL) is dimerization of protease. Residues 513–582 (KEALLDTGAD…TPVNIIGRNM (70 aa)) form the Peptidase A2 domain. Asp-518 serves as the catalytic For protease activity; shared with dimeric partner. Dimerization of protease regions lie at residues 542 to 548 (GIGGFIK) and 581 to 593 (NMLTQIGCTLNFP). Residues 636-826 (EGKILKIGPE…PPFLWMGYEL (191 aa)) form the Reverse transcriptase domain. Residues Asp-702, Asp-777, and Asp-778 each coordinate Mg(2+). Residues 819–827 (FLWMGYELH) form an RT 'primer grip' region. Residues 990–1006 (WEAWWTEYWQATWIPEW) carry the Tryptophan repeat motif motif. An RNase H type-1 domain is found at 1026–1149 (IVGAETFYVD…VDKLVSSGIR (124 aa)). Mg(2+)-binding residues include Asp-1035, Glu-1070, Asp-1090, and Asp-1141. The segment at 1155–1196 (DGIDKAQEEHEKYHSNWRAMASDFNLPPIVAKEIVASCDKCQ) adopts an Integrase-type zinc-finger fold. Positions 1164, 1168, 1192, and 1195 each coordinate Zn(2+). An Integrase catalytic domain is found at 1206–1356 (VDCSPGIWQL…SAGERIIDMI (151 aa)). Mg(2+)-binding residues include Asp-1216, Asp-1268, and Glu-1304. Positions 1375 to 1422 (FRVYYRDNRDPIWKGPAKLLWKGEGAVVIQDNSDIKVVPRRKAKIIRD) form a DNA-binding region, integrase-type.

In terms of assembly, homotrimer; further assembles as hexamers of trimers. Interacts with gp41 (via C-terminus). Interacts with host CALM1; this interaction induces a conformational change in the Matrix protein, triggering exposure of the myristate group. Interacts with host AP3D1; this interaction allows the polyprotein trafficking to multivesicular bodies during virus assembly. Part of the pre-integration complex (PIC) which is composed of viral genome, matrix protein, Vpr and integrase. As to quaternary structure, homodimer; the homodimer further multimerizes as homohexamers or homopentamers. Interacts with human PPIA/CYPA; This interaction stabilizes the capsid. Interacts with human NUP153. Interacts with host PDZD8; this interaction stabilizes the capsid. Interacts with monkey TRIM5; this interaction destabilizes the capsid. Homodimer, whose active site consists of two apposed aspartic acid residues. In terms of assembly, heterodimer of p66 RT and p51 RT (RT p66/p51). Heterodimerization of RT is essential for DNA polymerase activity. The overall folding of the subdomains is similar in p66 RT and p51 RT but the spatial arrangements of the subdomains are dramatically different. As to quaternary structure, homotetramer; may further associate as a homohexadecamer. Part of the pre-integration complex (PIC) which is composed of viral genome, matrix protein, Vpr and integrase. Interacts with human SMARCB1/INI1 and human PSIP1/LEDGF isoform 1. Interacts with human KPNA3; this interaction might play a role in nuclear import of the pre-integration complex. Interacts with human NUP153; this interaction might play a role in nuclear import of the pre-integration complex. Mg(2+) is required as a cofactor. In terms of processing, specific enzymatic cleavages by the viral protease yield mature proteins. The protease is released by autocatalytic cleavage. The polyprotein is cleaved during and after budding, this process is termed maturation. Proteolytic cleavage of p66 RT removes the RNase H domain to yield the p51 RT subunit. Nucleocapsid protein p7 might be further cleaved after virus entry. Post-translationally, tyrosine phosphorylated presumably in the virion by a host kinase. Phosphorylation is apparently not a major regulator of membrane association. Phosphorylated possibly by host MAPK1; this phosphorylation is necessary for Pin1-mediated virion uncoating. In terms of processing, methylated by host PRMT6, impairing its function by reducing RNA annealing and the initiation of reverse transcription.

It localises to the host cell membrane. Its subcellular location is the host endosome. The protein resides in the host multivesicular body. The protein localises to the virion membrane. It is found in the host nucleus. It localises to the host cytoplasm. Its subcellular location is the virion. The catalysed reaction is Specific for a P1 residue that is hydrophobic, and P1' variable, but often Pro.. It carries out the reaction Endohydrolysis of RNA in RNA/DNA hybrids. Three different cleavage modes: 1. sequence-specific internal cleavage of RNA. Human immunodeficiency virus type 1 and Moloney murine leukemia virus enzymes prefer to cleave the RNA strand one nucleotide away from the RNA-DNA junction. 2. RNA 5'-end directed cleavage 13-19 nucleotides from the RNA end. 3. DNA 3'-end directed cleavage 15-20 nucleotides away from the primer terminus.. The enzyme catalyses 3'-end directed exonucleolytic cleavage of viral RNA-DNA hybrid.. It catalyses the reaction DNA(n) + a 2'-deoxyribonucleoside 5'-triphosphate = DNA(n+1) + diphosphate. Its activity is regulated as follows. Protease: The viral protease is inhibited by many synthetic protease inhibitors (PIs), such as amprenavir, atazanavir, indinavir, loprinavir, nelfinavir, ritonavir and saquinavir. Use of protease inhibitors in tritherapy regimens permit more ambitious therapeutic strategies. Reverse transcriptase/ribonuclease H: RT can be inhibited either by nucleoside RT inhibitors (NRTIs) or by non nucleoside RT inhibitors (NNRTIs). NRTIs act as chain terminators, whereas NNRTIs inhibit DNA polymerization by binding a small hydrophobic pocket near the RT active site and inducing an allosteric change in this region. Classical NRTIs are abacavir, adefovir (PMEA), didanosine (ddI), lamivudine (3TC), stavudine (d4T), tenofovir (PMPA), zalcitabine (ddC), and zidovudine (AZT). Classical NNRTIs are atevirdine (BHAP U-87201E), delavirdine, efavirenz (DMP-266), emivirine (I-EBU), and nevirapine (BI-RG-587). The tritherapies used as a basic effective treatment of AIDS associate two NRTIs and one NNRTI. Mediates, with Gag polyprotein, the essential events in virion assembly, including binding the plasma membrane, making the protein-protein interactions necessary to create spherical particles, recruiting the viral Env proteins, and packaging the genomic RNA via direct interactions with the RNA packaging sequence (Psi). Gag-Pol polyprotein may regulate its own translation, by the binding genomic RNA in the 5'-UTR. At low concentration, the polyprotein would promote translation, whereas at high concentration, the polyprotein would encapsidate genomic RNA and then shut off translation. In terms of biological role, targets the polyprotein to the plasma membrane via a multipartite membrane-binding signal, that includes its myristoylated N-terminus. Matrix protein is part of the pre-integration complex. Implicated in the release from host cell mediated by Vpu. Binds to RNA. Functionally, forms the conical core that encapsulates the genomic RNA-nucleocapsid complex in the virion. Most core are conical, with only 7% tubular. The core is constituted by capsid protein hexamer subunits. The core is disassembled soon after virion entry. Host restriction factors such as TRIM5-alpha or TRIMCyp bind retroviral capsids and cause premature capsid disassembly, leading to blocks in reverse transcription. Capsid restriction by TRIM5 is one of the factors which restricts HIV-1 to the human species. Host PIN1 apparently facilitates the virion uncoating. On the other hand, interactions with PDZD8 or CYPA stabilize the capsid. Its function is as follows. Encapsulates and protects viral dimeric unspliced genomic RNA (gRNA). Binds these RNAs through its zinc fingers. Acts as a nucleic acid chaperone which is involved in rearangement of nucleic acid secondary structure during gRNA retrotranscription. Also facilitates template switch leading to recombination. As part of the polyprotein, participates in gRNA dimerization, packaging, tRNA incorporation and virion assembly. Aspartyl protease that mediates proteolytic cleavages of Gag and Gag-Pol polyproteins during or shortly after the release of the virion from the plasma membrane. Cleavages take place as an ordered, step-wise cascade to yield mature proteins. This process is called maturation. Displays maximal activity during the budding process just prior to particle release from the cell. Also cleaves Nef and Vif, probably concomitantly with viral structural proteins on maturation of virus particles. Hydrolyzes host EIF4GI and PABP1 in order to shut off the capped cellular mRNA translation. The resulting inhibition of cellular protein synthesis serves to ensure maximal viral gene expression and to evade host immune response. Also mediates cleavage of host YTHDF3. Mediates cleavage of host CARD8, thereby activating the CARD8 inflammasome, leading to the clearance of latent HIV-1 in patient CD4(+) T-cells after viral reactivation; in contrast, HIV-1 can evade CARD8-sensing when its protease remains inactive in infected cells prior to viral budding. In terms of biological role, multifunctional enzyme that converts the viral RNA genome into dsDNA in the cytoplasm, shortly after virus entry into the cell. This enzyme displays a DNA polymerase activity that can copy either DNA or RNA templates, and a ribonuclease H (RNase H) activity that cleaves the RNA strand of RNA-DNA heteroduplexes in a partially processive 3' to 5' endonucleasic mode. Conversion of viral genomic RNA into dsDNA requires many steps. A tRNA(3)-Lys binds to the primer-binding site (PBS) situated at the 5'-end of the viral RNA. RT uses the 3' end of the tRNA primer to perform a short round of RNA-dependent minus-strand DNA synthesis. The reading proceeds through the U5 region and ends after the repeated (R) region which is present at both ends of viral RNA. The portion of the RNA-DNA heteroduplex is digested by the RNase H, resulting in a ssDNA product attached to the tRNA primer. This ssDNA/tRNA hybridizes with the identical R region situated at the 3' end of viral RNA. This template exchange, known as minus-strand DNA strong stop transfer, can be either intra- or intermolecular. RT uses the 3' end of this newly synthesized short ssDNA to perform the RNA-dependent minus-strand DNA synthesis of the whole template. RNase H digests the RNA template except for two polypurine tracts (PPTs) situated at the 5'-end and near the center of the genome. It is not clear if both polymerase and RNase H activities are simultaneous. RNase H probably can proceed both in a polymerase-dependent (RNA cut into small fragments by the same RT performing DNA synthesis) and a polymerase-independent mode (cleavage of remaining RNA fragments by free RTs). Secondly, RT performs DNA-directed plus-strand DNA synthesis using the PPTs that have not been removed by RNase H as primers. PPTs and tRNA primers are then removed by RNase H. The 3' and 5' ssDNA PBS regions hybridize to form a circular dsDNA intermediate. Strand displacement synthesis by RT to the PBS and PPT ends produces a blunt ended, linear dsDNA copy of the viral genome that includes long terminal repeats (LTRs) at both ends. Functionally, catalyzes viral DNA integration into the host chromosome, by performing a series of DNA cutting and joining reactions. This enzyme activity takes place after virion entry into a cell and reverse transcription of the RNA genome in dsDNA. The first step in the integration process is 3' processing. This step requires a complex comprising the viral genome, matrix protein, Vpr and integrase. This complex is called the pre-integration complex (PIC). The integrase protein removes 2 nucleotides from each 3' end of the viral DNA, leaving recessed CA OH's at the 3' ends. In the second step, the PIC enters cell nucleus. This process is mediated through integrase and Vpr proteins, and allows the virus to infect a non dividing cell. This ability to enter the nucleus is specific of lentiviruses, other retroviruses cannot and rely on cell division to access cell chromosomes. In the third step, termed strand transfer, the integrase protein joins the previously processed 3' ends to the 5' ends of strands of target cellular DNA at the site of integration. The 5'-ends are produced by integrase-catalyzed staggered cuts, 5 bp apart. A Y-shaped, gapped, recombination intermediate results, with the 5'-ends of the viral DNA strands and the 3' ends of target DNA strands remaining unjoined, flanking a gap of 5 bp. The last step is viral DNA integration into host chromosome. This involves host DNA repair synthesis in which the 5 bp gaps between the unjoined strands are filled in and then ligated. Since this process occurs at both cuts flanking the HIV genome, a 5 bp duplication of host DNA is produced at the ends of HIV-1 integration. Alternatively, Integrase may catalyze the excision of viral DNA just after strand transfer, this is termed disintegration. The polypeptide is Gag-Pol polyprotein (gag-pol) (Human immunodeficiency virus type 1 group M subtype A (isolate MAL) (HIV-1)).